The sequence spans 745 residues: Phosphoribosylformylglycinamidine synthase subunit PurL (745 aa).

H50 is an active-site residue. ATP is bound by residues Y53 and K92. E94 lines the Mg(2+) pocket. Substrate-binding positions include S95 to H98 and R117. Residue H96 is the Proton acceptor of the active site. D118 provides a ligand contact to Mg(2+). Q241 lines the substrate pocket. D269 contributes to the Mg(2+) binding site. E313 to Q315 contacts substrate. Residues D495 and G532 each coordinate ATP. Residue N533 participates in Mg(2+) binding. S535 serves as a coordination point for substrate.

This sequence belongs to the FGAMS family. In terms of assembly, monomer. Part of the FGAM synthase complex composed of 1 PurL, 1 PurQ and 2 PurS subunits.

It localises to the cytoplasm. It catalyses the reaction N(2)-formyl-N(1)-(5-phospho-beta-D-ribosyl)glycinamide + L-glutamine + ATP + H2O = 2-formamido-N(1)-(5-O-phospho-beta-D-ribosyl)acetamidine + L-glutamate + ADP + phosphate + H(+). It functions in the pathway purine metabolism; IMP biosynthesis via de novo pathway; 5-amino-1-(5-phospho-D-ribosyl)imidazole from N(2)-formyl-N(1)-(5-phospho-D-ribosyl)glycinamide: step 1/2. Functionally, part of the phosphoribosylformylglycinamidine synthase complex involved in the purines biosynthetic pathway. Catalyzes the ATP-dependent conversion of formylglycinamide ribonucleotide (FGAR) and glutamine to yield formylglycinamidine ribonucleotide (FGAM) and glutamate. The FGAM synthase complex is composed of three subunits. PurQ produces an ammonia molecule by converting glutamine to glutamate. PurL transfers the ammonia molecule to FGAR to form FGAM in an ATP-dependent manner. PurS interacts with PurQ and PurL and is thought to assist in the transfer of the ammonia molecule from PurQ to PurL. This is Phosphoribosylformylglycinamidine synthase subunit PurL from Allorhizobium ampelinum (strain ATCC BAA-846 / DSM 112012 / S4) (Agrobacterium vitis (strain S4)).